We begin with the raw amino-acid sequence, 540 residues long: Chaperonin GroEL (540 aa).

ATP contacts are provided by residues 29 to 32 (TLGP), 86 to 90 (DGTTT), G413, 476 to 478 (NAA), and D492.

The protein belongs to the chaperonin (HSP60) family. In terms of assembly, forms a cylinder of 14 subunits composed of two heptameric rings stacked back-to-back. Interacts with the co-chaperonin GroES.

Its subcellular location is the cytoplasm. It carries out the reaction ATP + H2O + a folded polypeptide = ADP + phosphate + an unfolded polypeptide.. Its function is as follows. Together with its co-chaperonin GroES, plays an essential role in assisting protein folding. The GroEL-GroES system forms a nano-cage that allows encapsulation of the non-native substrate proteins and provides a physical environment optimized to promote and accelerate protein folding. The chain is Chaperonin GroEL from Streptococcus constellatus.